The primary structure comprises 181 residues: UPF0232 protein SAV_4320 (181 aa).

Positions Met1 to Glu10 are enriched in polar residues. Disordered regions lie at residues Met1 to Pro64 and Gln156 to Gly181. Over residues Ala30–Gly39 the composition is skewed to basic and acidic residues.

This sequence belongs to the UPF0232 family.

The sequence is that of UPF0232 protein SAV_4320 from Streptomyces avermitilis (strain ATCC 31267 / DSM 46492 / JCM 5070 / NBRC 14893 / NCIMB 12804 / NRRL 8165 / MA-4680).